A 178-amino-acid polypeptide reads, in one-letter code: CASP-like protein 2A2 (178 aa).

The Cytoplasmic portion of the chain corresponds to 1–22 (MDKTDQTAIDGSALELNRTEKT). Residues 23 to 43 (VEAVLRVASMALSITGLVIMI) traverse the membrane as a helical segment. Residues 44-69 (KNSISNDFGSLSYSNLGAFMYLVGAN) are Extracellular-facing. A helical transmembrane segment spans residues 70–90 (GVCAAYSLLSALAILALPCPI). Residues 91-96 (SKVQVR) are Cytoplasmic-facing. Residues 97–117 (TLFLLDQVVTYVVLAAGAVSA) traverse the membrane as a helical segment. Topologically, residues 118-145 (ETVYLAYYGNIPITWSSACDSYGIFCHK) are extracellular. The helical transmembrane segment at 146–166 (ALISVVFTFVVSLLYMLLSLI) threads the bilayer. Topologically, residues 167–178 (SSYRLFSRFEAP) are cytoplasmic.

This sequence belongs to the Casparian strip membrane proteins (CASP) family. As to quaternary structure, homodimer and heterodimers.

Its subcellular location is the cell membrane. This is CASP-like protein 2A2 from Arabidopsis lyrata subsp. lyrata (Lyre-leaved rock-cress).